A 138-amino-acid chain; its full sequence is Larval cuticle protein 1 (138 aa).

The signal sequence occupies residues 1 to 16; the sequence is MFKFVMVFAVLGVAAA. The Chitin-binding type R&amp;R domain occupies 49–110; the sequence is ADGFDADLLV…PVGAVLPTPP (62 aa).

Component of the larval cuticle. This is Larval cuticle protein 1 (Lcp1) from Drosophila miranda (Fruit fly).